The chain runs to 197 residues: Dephospho-CoA kinase (197 aa).

Residues 4 to 197 (RLGLTGSIGM…RQIRAGNIHA (194 aa)) form the DPCK domain. Residue 12–17 (GMGKST) participates in ATP binding.

It belongs to the CoaE family.

It localises to the cytoplasm. The catalysed reaction is 3'-dephospho-CoA + ATP = ADP + CoA + H(+). The protein operates within cofactor biosynthesis; coenzyme A biosynthesis; CoA from (R)-pantothenate: step 5/5. Its function is as follows. Catalyzes the phosphorylation of the 3'-hydroxyl group of dephosphocoenzyme A to form coenzyme A. The polypeptide is Dephospho-CoA kinase (Ruegeria pomeroyi (strain ATCC 700808 / DSM 15171 / DSS-3) (Silicibacter pomeroyi)).